A 1018-amino-acid polypeptide reads, in one-letter code: Thrombospondin type-1 domain-containing protein 4 (1018 aa).

Positions 1–25 (MVSHFMGSLSVLCFLLLLGFQFVCP) are cleaved as a signal peptide. Positions 53 to 307 (PGVWGAWGPW…YKLCNTNVCP (255 aa)) constitute a TSP type-1 1 domain. Disordered stretches follow at residues 111-235 (SVPL…RSGL), 254-279 (PAAS…ATQS), and 534-623 (SPQV…NWKQ). Residues 187–200 (QRLRRQKLSSRHSR) show a composition bias toward basic residues. The span at 201 to 210 (SQGASSARHG) shows a compositional bias: low complexity. The span at 259–279 (LFHSPETSNNHGVGTHGATQS) shows a compositional bias: polar residues. Composition is skewed to basic and acidic residues over residues 556–577 (RSQE…RGEA) and 592–603 (RHPDRFSPHRPD). 5 TSP type-1 domains span residues 676-737 (CPAF…KICS), 739-792 (WQIR…DMGP), 793-851 (CAKS…GPCT), 852-911 (GKVE…HLKP), and 912-968 (CGAK…QDCV). One can recognise a PLAC domain in the interval 971–1008 (VDENCKDKYYNCNVVVQARLCVYNYYKTACCASCTRVA).

As to quaternary structure, interacts with FBN1. May interact with TGFB1.

The protein resides in the secreted. It localises to the extracellular space. Its subcellular location is the extracellular matrix. Functionally, promotes FBN1 matrix assembly. Attenuates TGFB signaling, possibly by accelerating the sequestration of large latent complexes of TGFB or active TGFB by FBN1 microfibril assembly, thereby negatively regulating the expression of TGFB regulatory targets, such as POSTN. The sequence is that of Thrombospondin type-1 domain-containing protein 4 (THSD4) from Homo sapiens (Human).